The chain runs to 479 residues: Proline--tRNA ligase (479 aa).

It belongs to the class-II aminoacyl-tRNA synthetase family. ProS type 3 subfamily. Homodimer.

Its subcellular location is the cytoplasm. It catalyses the reaction tRNA(Pro) + L-proline + ATP = L-prolyl-tRNA(Pro) + AMP + diphosphate. Catalyzes the attachment of proline to tRNA(Pro) in a two-step reaction: proline is first activated by ATP to form Pro-AMP and then transferred to the acceptor end of tRNA(Pro). In Mesomycoplasma hyopneumoniae (strain J / ATCC 25934 / NCTC 10110) (Mycoplasma hyopneumoniae), this protein is Proline--tRNA ligase.